The primary structure comprises 100 residues: Urease subunit gamma (100 aa).

Belongs to the urease gamma subunit family. In terms of assembly, heterotrimer of UreA (gamma), UreB (beta) and UreC (alpha) subunits. Three heterotrimers associate to form the active enzyme.

It localises to the cytoplasm. It carries out the reaction urea + 2 H2O + H(+) = hydrogencarbonate + 2 NH4(+). It participates in nitrogen metabolism; urea degradation; CO(2) and NH(3) from urea (urease route): step 1/1. The protein is Urease subunit gamma of Rhizobium meliloti (strain 1021) (Ensifer meliloti).